The primary structure comprises 614 residues: DNA repair protein rad26 (614 aa).

Over residues 29–43 the composition is skewed to low complexity; it reads QAQTQVQAQSSQVVV. Disordered regions lie at residues 29-76 and 157-214; these read QAQT…QASL and KKMK…TAED. Polar residues-rich tracts occupy residues 50 to 76 and 181 to 190; these read QNLNLPNSYTNSSQKVRESTVNSQASL and LLSSSDQLAK. The span at 191–207 shows a compositional bias: basic residues; that stretch reads STKHAAKNSPSKKKRKT.

Interacts with cds1.

The protein resides in the nucleus. Its function is as follows. Involved in cell cycle arrest when DNA synthesis is inhibited by hydroxyurea, and in mitosis arrest after treatment with DNA-damaging agents. This protein is S phase-specific. This is DNA repair protein rad26 (rad26) from Schizosaccharomyces pombe (strain 972 / ATCC 24843) (Fission yeast).